We begin with the raw amino-acid sequence, 343 residues long: MLFAMQLASASVLPMVLKSAIELDLLEIIASQDTCMSPTEIASHLPTTNPHAPTMIDRILRLLSSYSIVTCSVRSVDDQRVYSPAPVCKYLTKNQDGVSIAALCVAAQDKVLMECWYHMKDAVLDGGIPFNKAYGMPIFDYFAKDLGSNKVFNKGMSDFSSMIIKKILETYKGFQGLTSLVDVGGGTGATLTKILSKYPTIRGINFDLPHVIQDAPEYPGIEHVGGDMFVSVPKGDAIFMKWICHDWNEEQCLKLLKNCYDALPNNGKVIVAEYILPVVPDSSLASKLSVTADVMIVTQNSGGKERTEKEFEALAKAAGFQGFQVFCNAFTIYIIEFSKNISN.

S-adenosyl-L-homocysteine-binding residues include Gly184, Asp207, Asp227, Met228, Met240, and Lys241. The active-site Proton acceptor is His245. Catalysis depends on residues Glu273 and Glu305.

It belongs to the class I-like SAM-binding methyltransferase superfamily. Cation-independent O-methyltransferase family. In terms of assembly, homodimer.

The catalysed reaction is 3',5-dihydroxy-3,4',7-trimethoxyflavone + S-adenosyl-L-methionine = 5-hydroxy-3,7,3',4'-tetramethoxyflavone + S-adenosyl-L-homocysteine + H(+). Its pathway is flavonoid metabolism. Inhibited by nickel (NiCl(2) and NiSO(4)) and para-chloromercuribenzoate. Catalyzes the 3'- or 5'-O-methylation of partially methylated flavonols, but does not accept quercetin or caffeate as substrates for methylation. In Chrysosplenium americanum (American golden saxifrage), this protein is Flavonoid 3'-O-methyltransferase FOMT.